The sequence spans 460 residues: EPD1-interacting receptor-like cytoplasmic serine/threonine-protein kinase 5D (460 aa).

The Protein kinase domain maps to 83-364 (FSSANFLGEG…DVVNILEPLL (282 aa)). Residues 89-97 (LGEGGFGPV) and Lys-118 each bind ATP. Residues Tyr-163 and Tyr-165 each carry the phosphotyrosine modification. The Proton acceptor role is filled by Asp-213.

It belongs to the protein kinase superfamily. Ser/Thr protein kinase family. In terms of assembly, interacts with the V.dahliae elicitor EPD1 (AC G2WWH6). Post-translationally, phosphorylated at Tyr-163 and Tyr-165 in the presence of pathogen-associated molecular patterns (PAMPs); this triggers the expression of pathogenesis-related genes. As to expression, mostly expressed in roots and, to a lesser extent, in leaves.

The protein resides in the cell membrane. The catalysed reaction is L-seryl-[protein] + ATP = O-phospho-L-seryl-[protein] + ADP + H(+). It catalyses the reaction L-threonyl-[protein] + ATP = O-phospho-L-threonyl-[protein] + ADP + H(+). In terms of biological role, required for pathogen-associated molecular pattern (PAMP, e.g. chitin and flg22)-triggered immunity (PTI) involving reactive oxygen species (ROS) accumulation and triggering plant defense, including defense-related gene expression (e.g. PR1 and LOX). Ensures specific recognition of the EPD1 effector of Verticillium dahliae, resulting in a hypersensitive response known as effector-triggered immunity (ETI), characterized by the activation of programmed cell death to limit infection by the pathogen. Priming plants with the incompatible pathogen V.dahliae leads to an increased resistance to compatible pathogens, as a result of systemic acquired resistance (SAR). This chain is EPD1-interacting receptor-like cytoplasmic serine/threonine-protein kinase 5D, found in Gossypium barbadense (Sea Island cotton).